We begin with the raw amino-acid sequence, 247 residues long: Adenosine 5'-phosphosulfate reductase (247 aa).

The [4Fe-4S] cluster site is built by Cys133, Cys134, Cys216, and Cys219. A disordered region spans residues 222–247 (KPAPGSDPRSGRWAGQAKTECGLHAS). Catalysis depends on Cys242, which acts as the Nucleophile; cysteine thiosulfonate intermediate.

This sequence belongs to the PAPS reductase family. CysH subfamily. [4Fe-4S] cluster is required as a cofactor.

The protein localises to the cytoplasm. The catalysed reaction is [thioredoxin]-disulfide + sulfite + AMP + 2 H(+) = adenosine 5'-phosphosulfate + [thioredoxin]-dithiol. Its pathway is sulfur metabolism; hydrogen sulfide biosynthesis; sulfite from sulfate. Its function is as follows. Catalyzes the formation of sulfite from adenosine 5'-phosphosulfate (APS) using thioredoxin as an electron donor. The polypeptide is Adenosine 5'-phosphosulfate reductase (Rhodococcus opacus (strain B4)).